Reading from the N-terminus, the 230-residue chain is MNMMTVKQGVWAALLWPYLLAASIPLDCKDEQGSFSACPSISQEKLLDRVIQHAELIYRVSEESCSMFEEMFVPFPLRLQRNQAGYACITKALPIPSSKSEIQQISDTWLLHSVLLLVQSWIDPLVYLQTTLDRYDNASEMLLNKTKWVSDKLISLEQGVVVLIRKMLDEGMLTATYNEQGLFQYDVLPDMLESVMRDYTLLSCFKKDAHKMEIFLKLLKCRQTDKYNCP.

A signal peptide spans 1–23; that stretch reads MNMMTVKQGVWAALLWPYLLAAS. 3 disulfide bridges follow: Cys-28-Cys-38, Cys-88-Cys-204, and Cys-221-Cys-229. N-linked (GlcNAc...) asparagine glycosylation is found at Asn-137 and Asn-144.

Belongs to the somatotropin/prolactin family.

It localises to the secreted. The protein is Somatolactin of Hippoglossus hippoglossus (Atlantic halibut).